The following is a 649-amino-acid chain: Outer dense fiber protein 2 (649 aa).

The disordered stretch occupies residues 1–65; that stretch reads MKNRSPSPPL…TKVPWIPPGK (65 aa). Coiled coils occupy residues 137–219, 247–426, and 464–649; these read QKRE…AETD, DINL…LEML, and EVAV…NCAL. Positions 339-358 are disordered; that stretch reads SEVSKSIESTKAHLQGQLRT.

The protein belongs to the ODF2 family. In terms of assembly, self-associates. Associates with microtubules and forms a fibrillar structure partially linked to the microtubule network.

The protein resides in the cytoplasm. It localises to the cytoskeleton. The protein localises to the microtubule organizing center. It is found in the centrosome. Its subcellular location is the cell projection. The protein resides in the cilium. It localises to the centriole. The protein localises to the spindle pole. It is found in the flagellum. Seems to be a major form of sperm tail outer dense fibers. In Xenopus laevis (African clawed frog), this protein is Outer dense fiber protein 2 (odf2).